The sequence spans 193 residues: MATPASAPDTRALVADFVGYKLRQKGYVCGAGPGEGPAADPLHQAMRAAGDEFETRFRRTFSDLAAQLHVTPGSAQQRFTQVSDELFQGGPNWGRLVAFFVFGAALCAESVNKEMEPLVGQVQEWMVAYLETQLADWIHSSGGWAEFTALYGDGALEEARRLREGNWASVRTVLTGAVALGALVTVGAFFASK.

Position 2 is an N-acetylalanine (Ala-2). Residues 9-29 (DTRALVADFVGYKLRQKGYVC) carry the BH4 motif. Positions 85 to 104 (ELFQGGPNWGRLVAFFVFGA) match the BH1 motif. A BH2 motif is present at residues 136–151 (DWIHSSGGWAEFTALY). Phosphoserine is present on Ala-177.

The protein belongs to the Bcl-2 family. As to quaternary structure, interacts with HIF3A (via C-terminus domain). Interacts with BOP. In terms of tissue distribution, expressed (at protein level) in a wide range of tissues with highest levels in brain, spinal cord, testis, pancreas, heart, spleen and mammary glands. Moderate levels found in thymus, ovary and small intestine. Not detected in salivary gland, muscle or liver. Also expressed in cell lines of myeloid, fibroblast and epithelial origin. Not detected in most lymphoid cell lines.

It is found in the mitochondrion membrane. Functionally, promotes cell survival. Blocks dexamethasone-induced apoptosis. Mediates survival of postmitotic Sertoli cells by suppressing death-promoting activity of BAX. This chain is Bcl-2-like protein 2 (BCL2L2), found in Homo sapiens (Human).